A 117-amino-acid polypeptide reads, in one-letter code: Large ribosomal subunit protein bL19 (117 aa).

Belongs to the bacterial ribosomal protein bL19 family.

Its function is as follows. This protein is located at the 30S-50S ribosomal subunit interface and may play a role in the structure and function of the aminoacyl-tRNA binding site. The chain is Large ribosomal subunit protein bL19 from Shewanella amazonensis (strain ATCC BAA-1098 / SB2B).